Reading from the N-terminus, the 194-residue chain is Transmembrane protein 212 (194 aa).

The next 5 helical transmembrane spans lie at 11–31 (ILVT…FPVF), 44–64 (IACP…LLLA), 76–96 (ATFT…AIAL), 99–119 (ALLG…NYLG), and 148–168 (LQAL…TVFI).

It is found in the membrane. The protein is Transmembrane protein 212 (TMEM212) of Homo sapiens (Human).